A 141-amino-acid chain; its full sequence is Nucleoside triphosphatase NudI (141 aa).

Positions Met-1–Leu-141 constitute a Nudix hydrolase domain. Positions Gly-38–Gly-59 match the Nudix box motif.

The protein belongs to the Nudix hydrolase family. NudI subfamily. As to quaternary structure, monomer. It depends on Mg(2+) as a cofactor.

It catalyses the reaction a ribonucleoside 5'-triphosphate + H2O = a ribonucleoside 5'-phosphate + diphosphate + H(+). The enzyme catalyses a 2'-deoxyribonucleoside 5'-triphosphate + H2O = a 2'-deoxyribonucleoside 5'-phosphate + diphosphate + H(+). It carries out the reaction dUTP + H2O = dUMP + diphosphate + H(+). The catalysed reaction is dTTP + H2O = dTMP + diphosphate + H(+). It catalyses the reaction dCTP + H2O = dCMP + diphosphate + H(+). Catalyzes the hydrolysis of nucleoside triphosphates, with a preference for pyrimidine deoxynucleoside triphosphates (dUTP, dTTP and dCTP). The protein is Nucleoside triphosphatase NudI of Salmonella paratyphi B (strain ATCC BAA-1250 / SPB7).